We begin with the raw amino-acid sequence, 537 residues long: Apolipoprotein N-acyltransferase (537 aa).

6 consecutive transmembrane segments (helical) span residues 10–30, 37–57, 76–96, 107–127, 181–201, and 210–230; these read IALA…ITAG, LAPF…VWLI, YWFG…AFFV, FAVL…FALA, IGLW…ATLI, and AWRA…FGAI. A CN hydrolase domain is found at 248 to 501; it reads MQPNLQQDAK…EGILDASLPA (254 aa). The Proton acceptor role is filled by Glu295. The active site involves Lys360. Catalysis depends on Cys413, which acts as the Nucleophile. Residues 507–527 traverse the membrane as a helical segment; sequence IYARVGDVPAAVLVALAVLLA.

Belongs to the CN hydrolase family. Apolipoprotein N-acyltransferase subfamily.

Its subcellular location is the cell inner membrane. It catalyses the reaction N-terminal S-1,2-diacyl-sn-glyceryl-L-cysteinyl-[lipoprotein] + a glycerophospholipid = N-acyl-S-1,2-diacyl-sn-glyceryl-L-cysteinyl-[lipoprotein] + a 2-acyl-sn-glycero-3-phospholipid + H(+). Its pathway is protein modification; lipoprotein biosynthesis (N-acyl transfer). Catalyzes the phospholipid dependent N-acylation of the N-terminal cysteine of apolipoprotein, the last step in lipoprotein maturation. The chain is Apolipoprotein N-acyltransferase from Bradyrhizobium diazoefficiens (strain JCM 10833 / BCRC 13528 / IAM 13628 / NBRC 14792 / USDA 110).